A 365-amino-acid polypeptide reads, in one-letter code: 3-dehydroquinate synthase (365 aa).

NAD(+) contacts are provided by residues 106 to 110, 130 to 131, lysine 142, lysine 151, and 169 to 172; these read GVIGD, TT, and FFAT. Residues glutamate 184, histidine 247, and histidine 264 each coordinate Zn(2+).

Belongs to the sugar phosphate cyclases superfamily. Dehydroquinate synthase family. The cofactor is NAD(+). Co(2+) is required as a cofactor. Requires Zn(2+) as cofactor.

It is found in the cytoplasm. It catalyses the reaction 7-phospho-2-dehydro-3-deoxy-D-arabino-heptonate = 3-dehydroquinate + phosphate. It functions in the pathway metabolic intermediate biosynthesis; chorismate biosynthesis; chorismate from D-erythrose 4-phosphate and phosphoenolpyruvate: step 2/7. In terms of biological role, catalyzes the conversion of 3-deoxy-D-arabino-heptulosonate 7-phosphate (DAHP) to dehydroquinate (DHQ). The protein is 3-dehydroquinate synthase of Listeria innocua serovar 6a (strain ATCC BAA-680 / CLIP 11262).